The following is a 147-amino-acid chain: Large ribosomal subunit protein uL15 (147 aa).

This sequence belongs to the universal ribosomal protein uL15 family. As to quaternary structure, part of the 50S ribosomal subunit.

Its function is as follows. Binds to the 23S rRNA. The sequence is that of Large ribosomal subunit protein uL15 from Blochmanniella floridana.